The following is a 320-amino-acid chain: Ferrochelatase (320 aa).

2 residues coordinate Fe cation: His194 and Glu275.

Belongs to the ferrochelatase family.

It localises to the cytoplasm. It catalyses the reaction heme b + 2 H(+) = protoporphyrin IX + Fe(2+). It functions in the pathway porphyrin-containing compound metabolism; protoheme biosynthesis; protoheme from protoporphyrin-IX: step 1/1. Catalyzes the ferrous insertion into protoporphyrin IX. This is Ferrochelatase from Vibrio atlanticus (strain LGP32) (Vibrio splendidus (strain Mel32)).